Here is a 288-residue protein sequence, read N- to C-terminus: Homoserine kinase (288 aa).

ATP is bound at residue 79–89 (PPARGLGSSSA).

It belongs to the GHMP kinase family. Homoserine kinase subfamily.

It localises to the cytoplasm. It catalyses the reaction L-homoserine + ATP = O-phospho-L-homoserine + ADP + H(+). It functions in the pathway amino-acid biosynthesis; L-threonine biosynthesis; L-threonine from L-aspartate: step 4/5. In terms of biological role, catalyzes the ATP-dependent phosphorylation of L-homoserine to L-homoserine phosphate. The sequence is that of Homoserine kinase from Listeria innocua serovar 6a (strain ATCC BAA-680 / CLIP 11262).